The sequence spans 151 residues: uncharacterized protein (151 aa).

Positions 48–151 (RPPGWQPPVN…SKFDHTRKKF (104 aa)) are disordered. Residues 55 to 77 (PVNTGPTSPVSINASNAAPSNLK) are compositionally biased toward polar residues. 2 stretches are compositionally biased toward low complexity: residues 85–105 (PRRL…RLPS) and 123–141 (KSPS…SLLR).

This is an uncharacterized protein from Schizosaccharomyces pombe (strain 972 / ATCC 24843) (Fission yeast).